The primary structure comprises 323 residues: Ferrochelatase (323 aa).

Fe cation is bound by residues histidine 195 and glutamate 276.

This sequence belongs to the ferrochelatase family.

Its subcellular location is the cytoplasm. It carries out the reaction heme b + 2 H(+) = protoporphyrin IX + Fe(2+). Its pathway is porphyrin-containing compound metabolism; protoheme biosynthesis; protoheme from protoporphyrin-IX: step 1/1. Its function is as follows. Catalyzes the ferrous insertion into protoporphyrin IX. The sequence is that of Ferrochelatase from Mannheimia succiniciproducens (strain KCTC 0769BP / MBEL55E).